The primary structure comprises 1518 residues: WD repeat-containing protein 62 (1518 aa).

The residue at position 2 (alanine 2) is an N-acetylalanine. Serine 33 is modified (phosphoserine). Position 46 is a phosphothreonine (threonine 46). The residue at position 49 (serine 49) is a Phosphoserine. Threonine 50 carries the post-translational modification Phosphothreonine. Serine 52 is modified (phosphoserine). WD repeat units follow at residues 109–150, 153–194, 196–234, 291–330, 357–396, 402–450, 490–529, 532–574, 578–618, 626–665, 671–713, and 714–752; these read TARK…QVAE, GHKY…VVAS, KVSC…ETKV, INLK…YLAN, AVYP…RVGK, FHSS…DSHW, DVKA…ELVK, AHDA…NLEQ, DHSS…DGLH, AEKT…QKKC, GDEG…KMFG, and HSEI…TNCM. Phosphoserine is present on serine 501. Positions 762-772 are enriched in basic and acidic residues; sequence RQQQQHTNDKK. 2 disordered regions span residues 762–824 and 908–935; these read RQQQ…DPDP and ASLL…KESS. The segment covering 781-790 has biased composition (polar residues); that stretch reads TYVSTPSEIH. Over residues 797-809 the composition is skewed to acidic residues; that stretch reads QTEDDLEEECEPE. Residues 803 to 846 form a WD 13 repeat; that stretch reads EEECEPEEMLKTPSKDSLDPDPRCLLTNGKLPLWAKRLLGDDDV. Residues 810 to 824 show a composition bias toward basic and acidic residues; that stretch reads EMLKTPSKDSLDPDP. Residues 908–920 show a composition bias toward low complexity; that stretch reads ASLLSESESPQEA. Position 944 is a phosphoserine (serine 944). The interval 962-1055 is disordered; that stretch reads EVEAGPGDQQ…PSSSLPQTPE (94 aa). 2 stretches are compositionally biased toward polar residues: residues 971–981 and 1045–1054; these read QGDSYLRVSSD and VPSSSLPQTP. Threonine 1053 is subject to Phosphothreonine. Phosphoserine occurs at positions 1070, 1093, 1101, 1123, 1144, 1228, 1248, and 1249. The WD 14 repeat unit spans residues 1132-1173; it reads GGSQPRAGTGYASPDRTHVLAAGKAEETLEAWRPPPPCLTSL. Residues 1255–1293 form a WD 15 repeat; the sequence is SLGQELQAITTATTPSLDSEGQEPALRSWGNHEARANLR. A Phosphothreonine modification is found at threonine 1268. The segment at 1339–1377 is disordered; the sequence is FRPSLPAPESPGLPAHPSNPQLPEARPGIPGGTASLLEP.

Can form homodimers (via C-terminus). Interacts (via C-terminus) with MAPKBP1 (via C-terminus). Interacts with CDK5RAP2, CEP152, CEP63 and KIAA0753. CEP63, CDK5RAP2, CEP152, WDR62 are proposed to form a stepwise assembled complex at the centrosome forming a ring near parental centrioles. In terms of tissue distribution, present in fetal brain, enriched within the ventricular and subventricular zone (at protein level). In the embryonic brain it is expressed in mitotic neural precursor cells.

Its subcellular location is the nucleus. The protein resides in the cytoplasm. It is found in the cytoskeleton. It localises to the spindle pole. The protein localises to the microtubule organizing center. Its subcellular location is the centrosome. The protein resides in the centriole. Functionally, required for cerebral cortical development. Plays a role in neuronal proliferation and migration. Plays a role in mother-centriole-dependent centriole duplication; the function also seems to involve CEP152, CDK5RAP2 and CEP63 through a stepwise assembled complex at the centrosome that recruits CDK2 required for centriole duplication. The polypeptide is WD repeat-containing protein 62 (WDR62) (Homo sapiens (Human)).